Consider the following 177-residue polypeptide: SsrA-binding protein (177 aa).

2 disordered regions span residues 1 to 23 and 148 to 177; these read MYVP…KDGK and YDKR…QRGE. The span at 148–165 shows a compositional bias: basic and acidic residues; the sequence is YDKRQTLREKQDRRESDR.

It belongs to the SmpB family.

It is found in the cytoplasm. Required for rescue of stalled ribosomes mediated by trans-translation. Binds to transfer-messenger RNA (tmRNA), required for stable association of tmRNA with ribosomes. tmRNA and SmpB together mimic tRNA shape, replacing the anticodon stem-loop with SmpB. tmRNA is encoded by the ssrA gene; the 2 termini fold to resemble tRNA(Ala) and it encodes a 'tag peptide', a short internal open reading frame. During trans-translation Ala-aminoacylated tmRNA acts like a tRNA, entering the A-site of stalled ribosomes, displacing the stalled mRNA. The ribosome then switches to translate the ORF on the tmRNA; the nascent peptide is terminated with the 'tag peptide' encoded by the tmRNA and targeted for degradation. The ribosome is freed to recommence translation, which seems to be the essential function of trans-translation. The polypeptide is SsrA-binding protein (Streptomyces avermitilis (strain ATCC 31267 / DSM 46492 / JCM 5070 / NBRC 14893 / NCIMB 12804 / NRRL 8165 / MA-4680)).